A 23-amino-acid chain; its full sequence is FWGTLAKLALKAVPAVMGMIKKE.

Belongs to the non-disulfide-bridged peptide (NDBP) superfamily. Medium-length antimicrobial peptide (group 3) family. Ponericin-W subfamily. As to expression, expressed by the venom gland.

The protein resides in the secreted. It is found in the target cell membrane. In terms of biological role, may have antimicrobial properties, like most ant linear peptides. May act by disrupting the integrity of the bacterial cell membrane. In Dinoponera australis (Giant neotropical hunting ant), this protein is U1-poneritoxin-Da3b.